Consider the following 1641-residue polypeptide: MRDRVAMMLRPLVRGWIPRAVLLLTVAFSFGCNRNHNGQLPQSSGEPVAVAKEPVKGFVLVRAYPDQHDGELALALEFSQPLAATQEFDTLVRLEQGSGNHDGGWSLSDDAKTLRYPYVEADKHYTVLISGDLLAATGSRLGKSRKEPVYTGELDPVVGFASRGSILPARGSRGVPVVSVNVPEVDVEFMRVREKALPAFLARYHKAGQRSSWELSNQGNSRKRLSELADPVYVTRFVLDGKKNERALTYLPIQNIRELREPGLYFAVMKPTGSFSDAFETAFFSVSNIGLHARAYKDKLFVHTASLRSGNPYKQVDLLVLDAKGETVLQGATDDNGNALLNYTLNAGHVLVSRNGRDISILPFNQPALDLSEFAVAGRENPWFDVFAWSGRDLYRPGEMLRISALLRDRDGKPVKPQPVFLRLKQPDGKTFRETRLQPAEQGYLEFTQKIPSDAPTGRWRVEFRTDPASKEAVQGLAVRVEEFLPERMKLELSSAQPVLRAKAPFTLTADAAYLYGAPAAGNRFTANLAVAVEQHPLDNMPGWFFGDATLQLPRGAKETIDITLGADGHLVHDIVLPEEAKPVSPMAVVVSGSVYESGGRPVTRSLKRVLWPADALVGVRPLFDVASGADANGMARFELTRVGVDGKPQSAKGLKATLVRELRDYHWRYSDGRWDYDFTRRFENKETRTVDISSSHTTTLSLPVEWGDYWLEVFDPVTGLTMRYPFRAGWSWGDDNRGLDARPDKVKLALDKTSYRAGDTLKVTITPPHPGKGLLLVESDKPLYVQAIDANPSTTLEIPVTADWERHDVYVTALVFRGGSASNNTTPARAVGEAYVPMQRKERRVAVGLVVPKQVRPAQSLPVTVSVPELAGKQAHVTISAVDAGILNITGFPVPDAAAHFFAQRRLSVDAYDIYGRVIESFEGGTGRLKFGGDMALPPLPQAKRPTARSQTVDLFSGAVKLDAKGNAHIQLPVPDFNGALRVSALVYSDTRYGQRDAETVVRAPILAEASMPRVMAPGDRSTVTVDVQNFTGKQGKFAVKVEGVGPLVVAEAGRSVTLGIDGKTTLNFPLRALEGNSVAQVRVRVEGNGSKAERHYDLPVRAVWPQGLRTQAHVLNVLAPIAFDPALAKGLMPDSVNARLSVSTLAPIPFASVLQGVFEYPYGCAEQTASKGYAALWLDDATIRSLGIQGVTPAQRLERLEGALGRLASLQTTNGHFSMWGGNSDVNPVLTPYIAGFLLDAKDAGFAVSDAVLQKALNRLSEDLLSGAHLFYGNDQSEALMFAHQAWSGYVLARVNRAPLGTLRTLYDNERGKAVSGLSLVHLGVALSLQGDRKRGEAAIEAGFAKSEGGRPEVFGDYGSVIRDNALMIALVRAHGLAKPAYEARVMALGRDLQARRRSGWLWLSTQEQVALAQLGRALLVDQKKQVSGTLYVGKQREDIAASRLIGRSFDAAALARGVRFVPQGDVPLYASFEVAGIPRQAPVSDDSQLLVVRRWYTVDGKPWTPGPLKEGQALIVRVSVTSKQNMPDALLTDLLPAGLEIENFNLGETRQWADVTVDGIALSERADAADIKHEEFRDDRYVAMLQLTGGRTANLFYLVRAVTPGSYNVPPSLVEDMYRPALRGTGRVAPAMVTVVQP.

Residues 1 to 31 (MRDRVAMMLRPLVRGWIPRAVLLLTVAFSFG) form the signal peptide. Cys32 carries N-palmitoyl cysteine lipidation. A lipid anchor (S-diacylglycerol cysteine) is attached at Cys32. The segment at residues 1166 to 1169 (CAEQ) is a cross-link (isoglutamyl cysteine thioester (Cys-Gln)).

This sequence belongs to the protease inhibitor I39 (alpha-2-macroglobulin) family. Bacterial alpha-2-macroglobulin subfamily.

Its subcellular location is the cell membrane. Its function is as follows. Protects the bacterial cell from host peptidases. This is Alpha-2-macroglobulin from Xylella fastidiosa (strain Temecula1 / ATCC 700964).